Consider the following 328-residue polypeptide: Probable cell division protein WhiA (328 aa).

Positions 273-306 form a DNA-binding region, H-T-H motif; sequence SLEELGALADPPLTKDAVAGRIRRLLAMADKRAS.

This sequence belongs to the WhiA family. Monomer in solution.

Involved in cell division and chromosome segregation. Involved in sporulation. May coordinate the cessation of aerial hyphae growth and subsequent chromosome segregation and/or septation. Required for expression of the ParB partioning protein during sporogenesis. Activates its own transcription and represses WhiB. Binds with low affinity to its own promoter and to the Parp2 sporulation-specific promoter. Also binds directly to the RNA polymerase sigma factor WhiG, leading to inhibition of WhiG-dependent transcription in a dose-dependent manner. The protein is Probable cell division protein WhiA of Streptomyces coelicolor (strain ATCC BAA-471 / A3(2) / M145).